The sequence spans 346 residues: Enkurin domain-containing protein 1 (346 aa).

3 disordered regions span residues 1–24, 88–107, and 113–132; these read MCEG…DYYR, SGVS…NLRR, and RRFQ…PLKA. Ser-91 bears the Phosphoserine mark. Composition is skewed to basic and acidic residues over residues 98–107 and 113–125; these read KDHEKENLRR and RRFQ…REQG. Phosphoserine is present on Ser-136. An Enkurin domain is found at 251–343; sequence ERRDLWRKEA…IFSRPKVFVK (93 aa). Residues 259-280 are disordered; that stretch reads EAEARQRSQPDPSMPPGHTLMP.

Interacts with alpha-tubulin. Interacts (via central region) with CCP110 (via N-terminal region); competes with CEP97 for binding to CCP110. As to expression, widely expressed with highest levels in testis and lung.

It is found in the cytoplasm. Its subcellular location is the cytoskeleton. The protein localises to the microtubule organizing center. It localises to the centrosome. The protein resides in the centriole. It is found in the cilium basal body. Its subcellular location is the cell projection. The protein localises to the cilium. It localises to the spindle. The protein resides in the spindle pole. It is found in the cilium axoneme. In terms of biological role, microtubule-binding protein which regulates microtubule organization and stability. Promotes the stability of astral microtubules and facilitates the proper orientation of the mitotic spindle. This allows the oriented division of basal keratinocytes and contributes to epidermal stratification. Required for the assembly of both primary and motile cilia. Destabilizes the interaction between CCP110 and CEP97 by competing with CEP97 for binding to CCP110 which promotes the removal of CCP110 and CEP97 from the mother centriole and allows the initiation of ciliogenesis. The protein is Enkurin domain-containing protein 1 (Enkd1) of Mus musculus (Mouse).